Consider the following 273-residue polypeptide: Large ribosomal subunit protein uL2cz/uL2cy (273 aa).

Disordered stretches follow at residues 1 to 27 (MAKH…SNPR) and 225 to 273 (PVDH…RRRK).

The protein belongs to the universal ribosomal protein uL2 family. In terms of assembly, part of the 50S ribosomal subunit.

It localises to the plastid. The protein localises to the chloroplast. This is Large ribosomal subunit protein uL2cz/uL2cy (rpl2-A) from Lolium perenne (Perennial ryegrass).